A 202-amino-acid chain; its full sequence is Glycerol-3-phosphate acyltransferase (202 aa).

6 consecutive transmembrane segments (helical) span residues 2–22, 54–74, 85–105, 118–138, 140–160, and 162–182; these read MIVLMLLLAYIVGSFPSGVII, FVVTFLDIFKGFIVVFFPLLF, FFTNGLIVGVFAILGHVYPIF, AGVVLGVAPILLLILAAIFFL, LYLTKYVSLSSIVAAICCVIG, and LIIHDYILLVVSIIVAILLIF.

It belongs to the PlsY family. Probably interacts with PlsX.

The protein localises to the cell membrane. The catalysed reaction is an acyl phosphate + sn-glycerol 3-phosphate = a 1-acyl-sn-glycero-3-phosphate + phosphate. It functions in the pathway lipid metabolism; phospholipid metabolism. Its function is as follows. Catalyzes the transfer of an acyl group from acyl-phosphate (acyl-PO(4)) to glycerol-3-phosphate (G3P) to form lysophosphatidic acid (LPA). This enzyme utilizes acyl-phosphate as fatty acyl donor, but not acyl-CoA or acyl-ACP. The sequence is that of Glycerol-3-phosphate acyltransferase from Staphylococcus carnosus (strain TM300).